The chain runs to 262 residues: Protein N-terminal and lysine N-methyltransferase EFM7 (262 aa).

Residues Trp59, 86 to 88 (GAA), Asp108, Trp143, and Ser171 each bind S-adenosyl-L-methionine.

This sequence belongs to the class I-like SAM-binding methyltransferase superfamily. EFM7 family.

The protein localises to the cytoplasm. Its function is as follows. S-adenosyl-L-methionine-dependent protein methyltransferase that trimethylates the N-terminal glycine 'Gly-2' of elongation factor 1-alpha, before also catalyzing the mono- and dimethylation of 'Lys-3'. The chain is Protein N-terminal and lysine N-methyltransferase EFM7 from Candida albicans (strain SC5314 / ATCC MYA-2876) (Yeast).